A 361-amino-acid chain; its full sequence is S-adenosylmethionine:tRNA ribosyltransferase-isomerase (361 aa).

It belongs to the QueA family. In terms of assembly, monomer.

The protein resides in the cytoplasm. It catalyses the reaction 7-aminomethyl-7-carbaguanosine(34) in tRNA + S-adenosyl-L-methionine = epoxyqueuosine(34) in tRNA + adenine + L-methionine + 2 H(+). It functions in the pathway tRNA modification; tRNA-queuosine biosynthesis. In terms of biological role, transfers and isomerizes the ribose moiety from AdoMet to the 7-aminomethyl group of 7-deazaguanine (preQ1-tRNA) to give epoxyqueuosine (oQ-tRNA). The protein is S-adenosylmethionine:tRNA ribosyltransferase-isomerase of Rhizobium johnstonii (strain DSM 114642 / LMG 32736 / 3841) (Rhizobium leguminosarum bv. viciae).